The following is a 147-amino-acid chain: Hemoglobin subunit beta (147 aa).

Val2 carries the N-acetylvaline modification. Residues 3–147 form the Globin domain; it reads NLTSDEKTAV…VANALAHKYH (145 aa). Phosphoserine is present on Ser45. Position 60 is an N6-acetyllysine (Lys60). His64 is a heme b binding site. An N6-acetyllysine modification is found at Lys83. His93 is a heme b binding site. Cys94 is subject to S-nitrosocysteine. Lys145 is subject to N6-acetyllysine.

The protein belongs to the globin family. As to quaternary structure, heterotetramer of two alpha chains and two beta chains. As to expression, red blood cells.

Functionally, involved in oxygen transport from the lung to the various peripheral tissues. The chain is Hemoglobin subunit beta (HBB) from Dasypus novemcinctus (Nine-banded armadillo).